The primary structure comprises 595 residues: Aspartate--tRNA(Asp/Asn) ligase (595 aa).

An L-aspartate-binding site is contributed by E175. The segment at 199 to 202 (QQYK) is aspartate. The L-aspartate site is built by R221 and H454. 221 to 223 (RDE) is a binding site for ATP. Residue E488 participates in ATP binding. R495 provides a ligand contact to L-aspartate. 540 to 543 (GIDR) lines the ATP pocket.

This sequence belongs to the class-II aminoacyl-tRNA synthetase family. Type 1 subfamily. Homodimer.

It is found in the cytoplasm. The catalysed reaction is tRNA(Asx) + L-aspartate + ATP = L-aspartyl-tRNA(Asx) + AMP + diphosphate. Functionally, aspartyl-tRNA synthetase with relaxed tRNA specificity since it is able to aspartylate not only its cognate tRNA(Asp) but also tRNA(Asn). Reaction proceeds in two steps: L-aspartate is first activated by ATP to form Asp-AMP and then transferred to the acceptor end of tRNA(Asp/Asn). This is Aspartate--tRNA(Asp/Asn) ligase from Sinorhizobium medicae (strain WSM419) (Ensifer medicae).